The chain runs to 81 residues: Small ribosomal subunit protein bS16 (81 aa).

This sequence belongs to the bacterial ribosomal protein bS16 family.

In Acetivibrio thermocellus (strain ATCC 27405 / DSM 1237 / JCM 9322 / NBRC 103400 / NCIMB 10682 / NRRL B-4536 / VPI 7372) (Clostridium thermocellum), this protein is Small ribosomal subunit protein bS16.